Here is a 256-residue protein sequence, read N- to C-terminus: Dihydromonacolin L-[lovastatin nonaketide synthase] thioesterase (256 aa).

Catalysis depends on charge relay system residues S122, D201, and H229.

It belongs to the LovG family.

It catalyses the reaction dihydromonacolin L-[lovastatin nonaketide synthase] + H2O = holo-[lovastatin nonaketide synthase] + dihydromonacolin L carboxylate + H(+). It participates in polyketide biosynthesis; lovastatin biosynthesis. Esterase; part of the gene cluster that mediates the biosynthesis of lovastatin (also known as mevinolin, mevacor or monacolin K), a hypolipidemic inhibitor of (3S)-hydroxymethylglutaryl-coenzyme A (HMG-CoA) reductase (HMGR). The first step in the biosynthesis of lovastatin is the production of dihydromonacolin L acid by the lovastatin nonaketide synthase lovB and the trans-acting enoyl reductase lovC via condensation of one acetyl-CoA unit and 8 malonyl-CoA units. Dihydromonacolin L acid is released from lovB by the thioesterase lovG. Next, dihydromonacolin L acid is oxidized by the dihydromonacolin L monooxygenase lovA twice to form monacolin J acid. The 2-methylbutyrate moiety of lovastatin is synthesized by the lovastatin diketide synthase lovF via condensation of one acetyl-CoA unit and one malonyl-CoA unit. Finally, the covalent attachment of this moiety to monacolin J acid is catalyzed by the transesterase lovD to yield lovastatin. LovD has broad substrate specificity and can also convert monacolin J to simvastatin using alpha-dimethylbutanoyl-S-methyl-3-mercaptopropionate (DMB-S-MMP) as the thioester acyl donor, and can also catalyze the reverse reaction and function as hydrolase in vitro. LovD has much higher activity with LovF-bound 2-methylbutanoate than with free diketide substrates. Its function is as follows. Esterase that catalyzes the release of covalently bound dihydromonacolin L from LovB during lovastatin biosynthesis. The chain is Dihydromonacolin L-[lovastatin nonaketide synthase] thioesterase from Aspergillus terreus (strain NIH 2624 / FGSC A1156).